Here is a 192-residue protein sequence, read N- to C-terminus: uncharacterized protein (192 aa).

This is an uncharacterized protein from Haemophilus influenzae (strain ATCC 51907 / DSM 11121 / KW20 / Rd).